The following is a 237-amino-acid chain: uncharacterized protein (237 aa).

The tat-type signal signal peptide spans 1 to 25 (MRHIFQRLLPRRLWLAGLPCLALLG). Residues 201–237 (IERQLSTRKPAGNFSPDTPHESEKPAPSTHEVTPDEP) are disordered.

Post-translationally, exported by the Tat system. The position of the signal peptide cleavage has not been experimentally proven. Can also be exported by the Sec system.

This is an uncharacterized protein from Escherichia coli (strain K12).